A 455-amino-acid chain; its full sequence is MIIDLFQSKKLIISIIILILRISLFSCAEHLFFNNNFNFFNFSENNHAKVNELNIDTKYLYQGLRNINIYLALSALNGITKEKINDISQWNGYKTRNNDETNISNVVVTEWKQLNKKSFFLKNNNISNNDNLIKGMPNPYFINSLTEDINNINLYFNIRNDIKYGEIIYKGTYIPHIYNNIFLIFLISYMYWFCIKILFNGYIKGKYVAKEYILKISTLFIFFVILKISLIFLPAILSCIVCLILTFYFYSISMSPCKDIFYLFESTRIKKEPIGWIIIVYAESILIGNVIYNFLCPPKIIIIFIRYIQNDFLVKIICLTIILFISFLIFFLMISNIFPAKKAQNFVFSFTSSYLIVSCFAYFWNIFLLRFLNNTNIFQIEPIMFFSYTPKFVFNRQNMFALFMIFAMSILSIIFPRIKKLKQNIFDMKENIYDSDIDIGKASKNRYNIILNYFT.

Residues 12-32 (IISIIILILRISLFSCAEHLF) traverse the membrane as a helical segment. 3 N-linked (GlcNAc...) asparagine glycosylation sites follow: asparagine 41, asparagine 102, and asparagine 125. 6 consecutive transmembrane segments (helical) span residues 181-201 (IFLI…LFNG), 220-240 (FIFF…LSCI), 244-264 (ILTF…FYLF), 285-305 (ILIG…IIFI), 312-332 (FLVK…IFFL), and 346-366 (FVFS…FWNI). The N-linked (GlcNAc...) asparagine glycan is linked to asparagine 373. Residues 398–418 (NMFALFMIFAMSILSIIFPRI) traverse the membrane as a helical segment.

The protein localises to the cell projection. The protein resides in the cilium. It is found in the flagellum. Its subcellular location is the cell membrane. In terms of biological role, plays a role in gamete fertilization. Required for the successful transmission of parasites to mosquito. The protein is Membrane protein Pbs54 of Plasmodium berghei (strain Anka).